The primary structure comprises 206 residues: Protein GrpE (206 aa).

Residues 1–64 are disordered; it reads MSKKASMHKE…KALEEAQQQA (64 aa). Residues 46–58 are compositionally biased toward basic and acidic residues; it reads SDAKVQELEKALE.

It belongs to the GrpE family. In terms of assembly, homodimer.

Its subcellular location is the cytoplasm. In terms of biological role, participates actively in the response to hyperosmotic and heat shock by preventing the aggregation of stress-denatured proteins, in association with DnaK and GrpE. It is the nucleotide exchange factor for DnaK and may function as a thermosensor. Unfolded proteins bind initially to DnaJ; upon interaction with the DnaJ-bound protein, DnaK hydrolyzes its bound ATP, resulting in the formation of a stable complex. GrpE releases ADP from DnaK; ATP binding to DnaK triggers the release of the substrate protein, thus completing the reaction cycle. Several rounds of ATP-dependent interactions between DnaJ, DnaK and GrpE are required for fully efficient folding. This Prosthecochloris aestuarii (strain DSM 271 / SK 413) protein is Protein GrpE.